The following is a 65-amino-acid chain: Large ribosomal subunit protein bL35 (65 aa).

Disordered regions lie at residues 1-23 and 29-48; these read MPKIKTNRAAAKRFKKTGSGKVK and GSHILAKKSRKRKRDLRQSH. Residues 33 to 43 are compositionally biased toward basic residues; that stretch reads LAKKSRKRKRD.

The protein belongs to the bacterial ribosomal protein bL35 family.

This chain is Large ribosomal subunit protein bL35, found in Desulfatibacillum aliphaticivorans.